A 400-amino-acid polypeptide reads, in one-letter code: MNNLDEIKIESKTCLNDQEQEVKIDNMHMSDQDKNKIEIKNKSGLGEKWPEPIVRVQSLAESNLTSLPDRYIKPPSQRPQTTIIDHQPEVADINIPIIDLDSLFSGNEDDKKRISEACREWGFFQVINHGVKPELMDAARETWKSFFNLPVEAKEVYSNSPRTYEGYGSRLGVEKGAILDWNDYYYLHFLPLALKDFNKWPSLPSNIREMNDEYGKELVKLGGRLMTILSSNLGLRAEQLQEAFGGEDVGACLRVNYYPKCPQPELALGLSPHSDPGGMTILLPDDQVVGLQVRHGDTWITVNPLRHAFIVNIGDQIQILSNSKYKSVEHRVIVNSEKERVSLAFFYNPKSDIPIQPMQQLVTSTMPPLYPPMTFDQYRLFIRTQGPRGKSHVESHISPR.

Residues 248–349 (DVGACLRVNY…RVSLAFFYNP (102 aa)) enclose the Fe2OG dioxygenase domain. Position 254 (arginine 254) interacts with jasmonate. Residues asparagine 256 and tyrosine 258 each contribute to the 2-oxoglutarate site. Residues histidine 273, aspartate 275, and histidine 330 each coordinate Fe cation. 2-oxoglutarate-binding residues include arginine 340 and serine 342. Arginine 379 and arginine 383 together coordinate jasmonate.

The protein belongs to the iron/ascorbate-dependent oxidoreductase family. The cofactor is L-ascorbate. It depends on Fe(2+) as a cofactor.

The catalysed reaction is jasmonate + 2-oxoglutarate + O2 = (1R,2R)-12-hydroxyjasmonate + succinate + CO2. In terms of biological role, 2-oxoglutarate-dependent dioxygenase involved in the oxidation of jasmonate (JA), a stress-induced phytohormone synthesized in response to attack by pathogens and herbivores, which triggers the activation of defense responses via the JA-mediated signaling pathway. Converts JA to 12-hydroxyjasmonate (12OH-JA), an inactive form of JA. Prevents over-accumulation of JA and indirectly its bioactive form JA-Ile under stress response. Acts as a negative regulator of JA-mediated defense signaling, by contributing to 12OH-JA accumulation, which represses JA defense responses upon infection by the fungal pathogen Botrytis cinerea and the herbivorous caterpillar Mamestra brassicae. The chain is Jasmonate-induced oxygenase 1 from Arabidopsis thaliana (Mouse-ear cress).